Reading from the N-terminus, the 462-residue chain is Protein MOS2 (462 aa).

Residues 1–10 (MKLSFSLPSK) are compositionally biased toward low complexity. The tract at residues 1–32 (MKLSFSLPSKSKPKVTATTADGNNAVDDGTSK) is disordered. The G-patch domain occupies 156 to 202 (VDGFGAALMAGYGWKPGKGIGKNAKEDVEIKEYKKWTAKEGLGFDPD). Residues 231-258 (VFFVGKEVRIIAGRDVGLKGKIVEKPGS) form the KOW 1 domain. Residues 301 to 336 (DREKDKKTSGRGRGAERGSRSEVRASEKQDRGQTRE) are compositionally biased toward basic and acidic residues. Positions 301-340 (DREKDKKTSGRGRGAERGSRSEVRASEKQDRGQTRERKVK) are disordered. One can recognise a KOW 2 domain in the interval 401 to 428 (LPRRGGPVLVLSGKHKGVYGNLVEKDLD).

It belongs to the MOS2 family.

It localises to the nucleus. Functionally, required for innate and induced resistance to pathogens such as compatible and incompatible isolates of P.syringae and P.parasitica. The polypeptide is Protein MOS2 (MOS2) (Arabidopsis thaliana (Mouse-ear cress)).